Here is a 942-residue protein sequence, read N- to C-terminus: UvrABC system protein A (942 aa).

32 to 39 (GLSGSGKS) contributes to the ATP binding site. Residues 251-278 (CPVCGFTVPELEPRLFSFNAPFGSCPTC) form a C4-type zinc finger. ABC transporter domains follow at residues 308–589 (WNPI…KKSI) and 609–937 (GNGR…HYLK). Position 641 to 648 (641 to 648 (GVSGSGKS)) interacts with ATP. A C4-type zinc finger spans residues 740-766 (CEACSGDGIIKIEMHFLPDVYVPCEVC).

Belongs to the ABC transporter superfamily. UvrA family. In terms of assembly, forms a heterotetramer with UvrB during the search for lesions.

The protein localises to the cytoplasm. In terms of biological role, the UvrABC repair system catalyzes the recognition and processing of DNA lesions. UvrA is an ATPase and a DNA-binding protein. A damage recognition complex composed of 2 UvrA and 2 UvrB subunits scans DNA for abnormalities. When the presence of a lesion has been verified by UvrB, the UvrA molecules dissociate. This Streptococcus pyogenes serotype M6 (strain ATCC BAA-946 / MGAS10394) protein is UvrABC system protein A.